A 349-amino-acid chain; its full sequence is Replication-associated protein (349 aa).

A CRESS-DNA virus Rep endonuclease domain is found at 9–118; sequence RLAARNIFLT…DGDYCESGQY (110 aa). The short motif at 16–19 is the RCR-1 element; that stretch reads FLTY. A divalent metal cation contacts are provided by Glu-51, His-59, and His-61. An RCR-2 motif is present at residues 59-61; sequence HLH. Residue Tyr-105 is the For DNA cleavage activity of the active site. Residues 105–108 carry the RCR-3 motif; it reads YITK. Asp-109 contacts a divalent metal cation. Residues 141 to 151 form a binding to RBR1 region; it reads VEEALAIIRAG. An oligomerization region spans residues 154–174; sequence KTFIVSYHNVRANIERLFTKA. 220 to 227 contacts ATP; it reads GDSRTGKT.

This sequence belongs to the geminiviridae Rep protein family. Homooligomer. Interacts with the replication enhancer protein (REn). Interacts with host retinoblastoma-related protein 1 (RBR1), and may thereby induce the transcription of host replicative enzymes even if the cell is not dividing anymore. Interacts with host PCNA. Interacts with host SCE1 protein. Mg(2+) serves as cofactor. Mn(2+) is required as a cofactor.

The protein localises to the host nucleus. Its function is as follows. Essential for the replication of viral ssDNA. The closed circular ssDNA genome is first converted to a superhelical dsDNA. Rep binds a specific region at the genome origin of replication. It introduces an endonucleolytic nick within the conserved sequence 5'-TAATATTAC-3' in the intergenic region of the genome present in all geminiviruses, thereby initiating the rolling circle replication (RCR). Following cleavage, binds covalently to the 5'-phosphate of DNA as a tyrosyl ester. The cleavage gives rise to a free 3'-OH that serves as a primer for the cellular DNA polymerase. The polymerase synthesizes the (+) strand DNA by rolling circle mechanism. After one round of replication, a Rep-catalyzed nucleotidyl transfer reaction releases a circular single-stranded virus genome, thereby terminating the replication. Displays origin-specific DNA cleavage, nucleotidyl transferase, ATPase and helicase activities. The sequence is that of Replication-associated protein from Cabbage leaf curl virus (isolate Jamaica) (CaLCuV).